The following is a 1538-amino-acid chain: MADNPDPSSLLPDVFSPATRDWFLRAFKQPTAVQPQTWHVAARSEHALVIAPTGSGKTLAAFLYALDRLFREGGEDTREAHKRKTSRILYISPIKALGTDVQRNLQIPLKGIADERRRRGETEVNLRVGIRTGDTPAQERSKLTRNPPDILITTPESLYLMLTSRARETLRGVETVIIDEVHAVAGSKRGAHLALSLERLDALLHTSAQRIGLSATVRSASDVAAFLGGDRPVTVVNPPAMRHPQIRIVVPVANMDDVSSVASGTGEDSHAGREGSIWPYIETGILDEVLRHRSTIVFTNSRGLAEKLTARLNELYAARLQRSPSIAVDAAHFESTSGATSNRVQSSDVFIARSHHGSVSKEQRAITEQALKSGELRCVVATSSLELGIDMGAVDLVIQVATPLSVASGLQRIGRAGHQVGGVSKGLFFPRTRRDLVDSAVIVECMFAGRLENLTPPHNPLDVLAQQTVAAAAMDALQVDEWYSRVRRAAPWKDLPRRVFDATLDMLSGRYPSGDFSAFRPKLVWNRETGILTARPGAQLLAVTSGGTIPDRGMYSVLLPEGEEKAGSRRVGELDEEMVYESRVNDIITLGATSWRIQQITRDQVIVTPAPGRSARLPFWRGEGNGRPAELGEMIGDFLHLLADGAFFSGTIPPWLAEENTIANIQGLIEEQRNATGIVPGSRHLVLERCRDEIGDWRIILHSPYGRRVHEPWAVAIAGRIHALWGADASVVASDDGIVARIPDTDGKLPDAAIFLFEPEKLLQIVREAVGSSALFAARFRECAARALLMPGRTPGHRTPLWQQRLRASQLLEIAQGYPDFPVILETLRECLQDVYDLPALERLMRRLNGGEIQISDVTTTTPSPFATSLLFGYVAEFMYQSDAPLAERRASVLSLDSELLRNLLGQVDPGELLDPQVIRQVEEELQRLAPGRRAKGEEGLFDLLRELGPMTVEDLAQRHTGSSEEVASYLENLLAVKRIFPAMISGQERLACMDDAARLRDALGVRLPESLPEIYLHRVSYPLRDLFLRYLRAHALVTAEQLAHEFSLGIAIVEEQLQQLREQGLVMNLQQDIWVSDEVFRRLRLRSLQAAREATRPVAATTYARLLLERQGVLPATDGSPALFASTSPGVYEGVDGVMRVIEQLAGVGLPASLWESQILPARVRDYSSEMLDELLATGAVIWSGQKKLGEDDGLVALHLQEYAAESFTPAEADQANRSALQQAIVAVLADGGAWFAQQISQRIRDKIGESVDLSALQEALWALVWQGVITSDIWAPLRALTRSSSNARTSTRRSHRARRGRPVYAQPVSPRVSYNTPNLAGRWSLLQVEPLNDTERMLALAENMLDRYGIISRQAVIAENIPGGFPSMQTLCRSMEDSGRIMRGRFVEGLGGAQFAERLTIDRLRDLATQATQTRHYTPVALSANDPANVWGNLLPWPAHPATLVPTRRAGALVVVSGGKLLLYLAQGGKKMLVWQEKEELLAPEVFHALTTALRREPRLRFTLTEVNDLPVRQTPMFTLLREAGFSSSPQGLDWG.

The tract at residues 1 to 897 is lhr-Core; the sequence is MADNPDPSSL…ERRASVLSLD (897 aa). Gln34, Lys57, Thr58, Asp179, Glu180, Ile398, Arg415, and His418 together coordinate ATP. The Helicase ATP-binding domain maps to 38–235; that stretch reads WHVAARSEHA…FLGGDRPVTV (198 aa). The DEVH box signature appears at 179–182; the sequence is DEVH. The Helicase C-terminal domain maps to 284 to 462; the sequence is GILDEVLRHR…NLTPPHNPLD (179 aa). The interval 463-552 is beta-sheet bundle; the sequence is VLAQQTVAAA…VTSGGTIPDR (90 aa). A WH domain region spans residues 553 to 623; that stretch reads GMYSVLLPEG…SARLPFWRGE (71 aa). The domain 4 stretch occupies residues 624–897; it reads GNGRPAELGE…ERRASVLSLD (274 aa). The interval 898 to 1538 is lhr-CTD; sequence SELLRNLLGQ…SSSPQGLDWG (641 aa). Residues 1287-1312 are disordered; sequence SNARTSTRRSHRARRGRPVYAQPVSP. A compositionally biased stretch (basic residues) spans 1292–1303; the sequence is STRRSHRARRGR.

It belongs to the Lhr helicase family. As to quaternary structure, homooligomerizes, probably a homotetramer. Ca(2+) is required as a cofactor. The cofactor is Uracil deglycosylase activity does not require a cofactor..

The enzyme catalyses Couples ATP hydrolysis with the unwinding of duplex DNA by translocating in the 3'-5' direction.. It catalyses the reaction ATP + H2O = ADP + phosphate + H(+). The catalysed reaction is Hydrolyzes single-stranded DNA or mismatched double-stranded DNA and polynucleotides, releasing free uracil.. Its function is as follows. A 3'-5' helicase probably involved in DNA repair. Translocates in an ATP-dependent manner 3'-to-5' on single-stranded (ss)DNA, unwinding any encountered duplex nucleic acid. An RNA:DNA hybrid with a 3'-ssDNA loading strand is a 4.5-fold better helicase substrate than 3'-tailed double-stranded (ds)DNA; substrates where the helicase loads on a 3'-ssRNA tail (DNA:RNA and RNA:RNA) are not unwound. Unlike its M.smegmatis counterpart, the ATPase is not ssDNA-dependent. Forms a clamp around the ssDNA loading strand. Excises uracil residues from DNA; forked DNA with a dU residue is the best substrate followed by ssDNA. Inactive on dsDNA with a dU residue or DNA with an 8-oxoguanine residue. Uracil residues in DNA can arise as a result of misincorporation of dUMP residues by DNA polymerase or due to deamination of cytosine. The chain is Lhr helicase/uracil glycosylase from Escherichia coli (strain K12).